The primary structure comprises 159 residues: NADH-quinone oxidoreductase subunit B (159 aa).

Residues C37, C38, C102, and C132 each contribute to the [4Fe-4S] cluster site.

The protein belongs to the complex I 20 kDa subunit family. In terms of assembly, NDH-1 is composed of 14 different subunits. Subunits NuoB, C, D, E, F, and G constitute the peripheral sector of the complex. [4Fe-4S] cluster is required as a cofactor.

The protein localises to the cell inner membrane. The enzyme catalyses a quinone + NADH + 5 H(+)(in) = a quinol + NAD(+) + 4 H(+)(out). In terms of biological role, NDH-1 shuttles electrons from NADH, via FMN and iron-sulfur (Fe-S) centers, to quinones in the respiratory chain. Couples the redox reaction to proton translocation (for every two electrons transferred, four hydrogen ions are translocated across the cytoplasmic membrane), and thus conserves the redox energy in a proton gradient. This is NADH-quinone oxidoreductase subunit B from Paraburkholderia phymatum (strain DSM 17167 / CIP 108236 / LMG 21445 / STM815) (Burkholderia phymatum).